A 221-amino-acid polypeptide reads, in one-letter code: Histone H1.3 (221 aa).

The span at 1–17 (MSETAPLAPTIPAPAEK) shows a compositional bias: low complexity. Residues 1–43 (MSETAPLAPTIPAPAEKTPVKKKAKKAGATAGKRKASGPPVSE) form a disordered region. N-acetylserine is present on Ser2. Ser2 carries the post-translational modification Phosphoserine. Lys17 is subject to N6-acetyllysine. Thr18 is modified (phosphothreonine). Residues 20–36 (VKKKAKKAGATAGKRKA) are compositionally biased toward basic residues. Lys35, Lys47, and Lys53 each carry N6-(beta-hydroxybutyryl)lysine. Residues 37 to 110 (SGPPVSELIT…GASGSFKLNK (74 aa)) enclose the H15 domain. The residue at position 55 (Arg55) is a Citrulline. Residues Lys65, Lys76, Lys86, and Lys91 each carry the N6-(beta-hydroxybutyryl)lysine modification. The tract at residues 90–221 (SKGTLVQTKG…KAKKAAPKKK (132 aa)) is disordered. The residue at position 105 (Ser105) is a Phosphoserine; by PKC. Lys107 is modified (N6-(beta-hydroxybutyryl)lysine). Basic residues-rich tracts occupy residues 120-141 (KAKKAGAAKPRKPAGAAKKPKK), 150-161 (KSIKKTPKKVKK), and 170-179 (KVAKSAKKVK). The residue at position 170 (Lys170) is an N6-(beta-hydroxybutyryl)lysine. Residues 180 to 193 (TPQPKKAAKSPAKA) show a composition bias toward low complexity. Residues 194–221 (KAPKPKAAKPKSGKPKVTKAKKAAPKKK) are compositionally biased toward basic residues.

It belongs to the histone H1/H5 family. H1 histones are progressively phosphorylated during the cell cycle, becoming maximally phosphorylated during late G2 phase and M phase, and being dephosphorylated sharply thereafter. In terms of processing, citrullination at Arg-55 (H1R54ci) by PADI4 takes place within the DNA-binding site of H1 and results in its displacement from chromatin and global chromatin decondensation, thereby promoting pluripotency and stem cell maintenance.

The protein localises to the nucleus. It localises to the chromosome. In terms of biological role, histone H1 protein binds to linker DNA between nucleosomes forming the macromolecular structure known as the chromatin fiber. Histones H1 are necessary for the condensation of nucleosome chains into higher-order structured fibers. Also acts as a regulator of individual gene transcription through chromatin remodeling, nucleosome spacing and DNA methylation. This chain is Histone H1.3, found in Homo sapiens (Human).